The following is a 157-amino-acid chain: Transcriptional repressor NrdR (157 aa).

Residues 3 to 34 (CPHCHQNSSRVIDSRPTDEGRVIRRRRECENC) fold into a zinc finger. In terms of domain architecture, ATP-cone spans 49–139 (LLVIKKNGTR…VYRQFKDMNV (91 aa)).

The protein belongs to the NrdR family. Zn(2+) serves as cofactor.

In terms of biological role, negatively regulates transcription of bacterial ribonucleotide reductase nrd genes and operons by binding to NrdR-boxes. The protein is Transcriptional repressor NrdR of Latilactobacillus sakei subsp. sakei (strain 23K) (Lactobacillus sakei subsp. sakei).